Consider the following 171-residue polypeptide: Small ribosomal subunit protein uS4 (171 aa).

In terms of domain architecture, S4 RNA-binding spans 104 to 168 (RRLQTIVYKK…SPFKERAEEA (65 aa)).

This sequence belongs to the universal ribosomal protein uS4 family. Part of the 30S ribosomal subunit. Contacts protein S5. The interaction surface between S4 and S5 is involved in control of translational fidelity.

Functionally, one of the primary rRNA binding proteins, it binds directly to 16S rRNA where it nucleates assembly of the body of the 30S subunit. In terms of biological role, with S5 and S12 plays an important role in translational accuracy. This Aeropyrum pernix (strain ATCC 700893 / DSM 11879 / JCM 9820 / NBRC 100138 / K1) protein is Small ribosomal subunit protein uS4.